The primary structure comprises 157 residues: Protein SINE4 (157 aa).

The KASH domain occupies Val-104–Thr-157. A helical transmembrane segment spans residues Phe-122–Phe-142. The short motif at Leu-154–Thr-157 is the Required for nuclear localization element.

Interacts with SUN1 and SUN2.

The protein localises to the nucleus membrane. The sequence is that of Protein SINE4 from Arabidopsis thaliana (Mouse-ear cress).